The following is a 181-amino-acid chain: Sodium/potassium-transporting ATPase subunit beta-1-interacting protein 3 (181 aa).

A run of 4 helical transmembrane segments spans residues 2 to 22 (GCCT…LSAL), 35 to 55 (APIL…FGTI), 62 to 82 (IMVY…IICF), and 152 to 172 (VQIL…SISM).

This sequence belongs to the NKAIN family. In terms of assembly, interacts with ATP1B1. Detected in the brain only and specifically in neurons. Expressed in multiple regions such as cerebral cortex, thalamus, hippocampus, olfactory bulb and brainstem as well as in cerebellum with low expression in granular cell layer.

The protein resides in the cell membrane. The polypeptide is Sodium/potassium-transporting ATPase subunit beta-1-interacting protein 3 (Nkain3) (Mus musculus (Mouse)).